A 292-amino-acid chain; its full sequence is Sulfofructosephosphate aldolase (292 aa).

The Schiff-base intermediate with substrate role is filled by Lys193.

Belongs to the aldolase LacD family. Homotetramer.

It catalyses the reaction 6-deoxy-6-sulfo-D-fructose 1-phosphate = (2S)-3-sulfolactaldehyde + dihydroxyacetone phosphate. Functionally, cleaves 6-deoxy-6-sulfo-D-fructose 1-phosphate (SFP) to form dihydroxyacetone phosphate (DHAP) and 3-sulfolactaldehyde (SLA). Can also catalyze the reverse reaction. In Salmonella typhimurium (strain LT2 / SGSC1412 / ATCC 700720), this protein is Sulfofructosephosphate aldolase (yihT).